Reading from the N-terminus, the 607-residue chain is Guanine nucleotide-binding protein-like 1 (607 aa).

Over residues 1–14 (MPRKKPFSVKQKKK) the composition is skewed to basic residues. A disordered region spans residues 1–81 (MPRKKPFSVK…GPRGYDPNRY (81 aa)). Residues 15-26 (QLQDKRERKRGL) are compositionally biased toward basic and acidic residues. 3 positions are modified to phosphoserine: Ser-32, Ser-33, and Ser-34. Phosphothreonine occurs at positions 48 and 50. Ser-51 and Ser-68 each carry phosphoserine. A CP-type G domain is found at 178 to 418 (WRQLWRVLEM…LCDCPGLIFP (241 aa)). Position 225 to 228 (225 to 228 (NKVD)) interacts with GTP. Position 324 is a phosphoserine (Ser-324). GTP-binding positions include 367–374 (GFPNVGKS) and 411–415 (DCPGL). Residues 547–607 (GPAGDEEEEE…PYALLGEDEC (61 aa)) are disordered. Residues 550-584 (GDEEEEEEEELSSSCEEEGEEDRDADEEGEGDEET) show a composition bias toward acidic residues. Ser-561, Ser-562, and Ser-563 each carry phosphoserine.

This sequence belongs to the TRAFAC class YlqF/YawG GTPase family.

Possible regulatory or functional link with the histocompatibility cluster. The polypeptide is Guanine nucleotide-binding protein-like 1 (GNL1) (Homo sapiens (Human)).